We begin with the raw amino-acid sequence, 132 residues long: Large ribosomal subunit protein bL21 (132 aa).

The disordered stretch occupies residues 111–132; it reads AAEKPARKPRAKKTNEVTTDGA.

Belongs to the bacterial ribosomal protein bL21 family. Part of the 50S ribosomal subunit. Contacts protein L20.

Functionally, this protein binds to 23S rRNA in the presence of protein L20. The protein is Large ribosomal subunit protein bL21 of Dehalococcoides mccartyi (strain CBDB1).